Consider the following 328-residue polypeptide: Carbonic anhydrase-related protein 11 (328 aa).

Positions 1–23 are cleaved as a signal peptide; that stretch reads MGAAARLSAPRALVLWAALGAAA. An Alpha-carbonic anhydrase domain is found at 33-303; sequence DWWSYKDNLQ…LAHRALRGNR (271 aa). N-linked (GlcNAc...) asparagine glycans are attached at residues Asn-118, Asn-170, and Asn-260. Residues 299–328 are disordered; sequence LRGNRDPRHPERRCRGPNYRLHVDGVPHGR. The segment covering 319–328 has biased composition (basic and acidic residues); the sequence is LHVDGVPHGR.

This sequence belongs to the alpha-carbonic anhydrase family. In terms of tissue distribution, expressed abundantly in the brain with moderate expression also present in spinal cord and thyroid.

It is found in the secreted. Functionally, does not have a catalytic activity. The chain is Carbonic anhydrase-related protein 11 (CA11) from Homo sapiens (Human).